The chain runs to 860 residues: MARGIQGVMMRGFGARDHQATVVSTEAITPNLLRLRMVSPTLFEDAVAEPTSWLRFWFPDPAGSKTEFQRAYTMSEMSPETGEFAIDVVLHEPAGPASRWARSAKPGDAIAVMTLGSAGFSVPEDPPAGYLLIGDAAATPAINGIIGVVPHDIPIEVYLEEHDENDRLIPIAEHPRMRVHWVVREDATSLAGAIEARDWSNWYCWVTPEAGSLKHLRTRLRDEFGFPKAELHPQAYWTEGRAMGTKRGDDDKTPEVNPAPRADKPEAPAPAAAGRGNWRAQAAGRLLAPLKTTLIISGVLQAIITLVQLAPFVLLVELARLLLSGASSDRLWTLGVVAISLLGTGSFLAAALTLWLHLVDARFARDLRTGLLTKMSRLPLGWFTARGSGSIKQLVQDDTLSLHYLITHAIPDAVAAVIAPVAVLVYLFVVDWRLALVMFVPVLIYLVLMTVMTIQSGPKIAQSQRWAERMSAEAGAYLEGQPVVRVFGGAAASSFRRRLDEYIGFLVAWQKPFTGKKSMMDLVTRPGTFLWLIVAVGTPMITSGAMDPVDILPFLLLGTTFGVRLLGIAYGLGGIRGGMLAARRIQTTLDETELVIREQTGKRDGEPAVVFDNVTFGYRPDIPVLHDISLQLTPGTVTALVGPSGSGKSTLAALLARFHDVDAGAIRLGGRDIRTLTADELYRQVGFVLQDTQLVGGTVAENIALADPDASIERIQDAARDAQIHDRIMRLPNGYDTPLGAASSLSGGEKQRLTIARAILADTPVLILDEATAFADPESEYLVQQALNRLTRDRTVLVIAHRLHTITHADQIVVLEGGRIVETGTHERLLDAAGRYRQLWETGQRPALATAAGPTGEAVR.

Over 1–293 the chain is Cytoplasmic; the sequence is MARGIQGVMM…GRLLAPLKTT (293 aa). The FAD-binding FR-type domain maps to 15–124; it reads ARDHQATVVS…LGSAGFSVPE (110 aa). FAD-binding positions include 70–73, 87–91, 97–98, and 238–240; these read RAYT, DVVLH, AS, and TEG. A disordered region spans residues 242–275; that stretch reads AMGTKRGDDDKTPEVNPAPRADKPEAPAPAAAGR. A helical membrane pass occupies residues 294-314; that stretch reads LIISGVLQAIITLVQLAPFVL. The region spanning 295–577 is the ABC transmembrane type-1 domain; the sequence is IISGVLQAII…IAYGLGGIRG (283 aa). Residues 315–335 are Periplasmic-facing; that stretch reads LVELARLLLSGASSDRLWTLG. Residues 336 to 356 form a helical membrane-spanning segment; that stretch reads VVAISLLGTGSFLAAALTLWL. At 357 to 409 the chain is on the cytoplasmic side; the sequence is HLVDARFARDLRTGLLTKMSRLPLGWFTARGSGSIKQLVQDDTLSLHYLITHA. The chain crosses the membrane as a helical span at residues 410–430; sequence IPDAVAAVIAPVAVLVYLFVV. The Periplasmic segment spans residues 431 to 433; the sequence is DWR. The helical transmembrane segment at 434–454 threads the bilayer; it reads LALVMFVPVLIYLVLMTVMTI. Topologically, residues 455–525 are cytoplasmic; sequence QSGPKIAQSQ…KKSMMDLVTR (71 aa). Residues 526–546 traverse the membrane as a helical segment; sequence PGTFLWLIVAVGTPMITSGAM. At 547–550 the chain is on the periplasmic side; it reads DPVD. Residues 551-571 traverse the membrane as a helical segment; the sequence is ILPFLLLGTTFGVRLLGIAYG. Topologically, residues 572–860 are cytoplasmic; the sequence is LGGIRGGMLA…AAGPTGEAVR (289 aa). In terms of domain architecture, ABC transporter spans 609 to 842; that stretch reads VVFDNVTFGY…AGRYRQLWET (234 aa). 642 to 649 is a binding site for ATP; the sequence is GPSGSGKS.

It belongs to the ABC transporter superfamily. Siderophore-Fe(3+) uptake transporter (SIUT) (TC 3.A.1.21) family. Forms a heterodimer with IrtB. FAD serves as cofactor.

The protein localises to the cell inner membrane. Functionally, part of the ABC transporter complex IrtAB involved in the import of iron-bound mycobactin (Fe-MBT) and carboxymycobactin (Fe-cMBT). Has a preference for Fe-MBT over Fe-cMBT. Mycobactins are then reduced by the siderophore interaction domain to facilitate iron release in the bacterial cell. Transmembrane domains (TMD) form a pore in the membrane and the ATP-binding domain (NBD) is responsible for energy generation. This is Mycobactin import ATP-binding/permease protein IrtA from Mycolicibacterium smegmatis (strain ATCC 700084 / mc(2)155) (Mycobacterium smegmatis).